Reading from the N-terminus, the 172-residue chain is TGEKPFSCSDCGARFTYRSLLRRHNKIHAEGKSLICSECGKPFTSESALTAHQRSHGGEKPFSCTDCEKCFAQRMHLIEHQRTHTGEKPFSCTVCGEMFTYRAQFSKHMLKHKRKRTEGESLDCSHCGKHFTSRSDLTVHRKSHKGKSPLQCSDCGKCFKYQSQLASHQRVH.

6 consecutive C2H2-type zinc fingers follow at residues 6 to 28, 34 to 56, 62 to 84, 90 to 112, 122 to 144, and 150 to 172; these read FSCSDCGARFTYRSLLRRHNKIH, LICSECGKPFTSESALTAHQRSH, FSCTDCEKCFAQRMHLIEHQRTH, FSCTVCGEMFTYRAQFSKHMLKH, LDCSHCGKHFTSRSDLTVHRKSH, and LQCSDCGKCFKYQSQLASHQRVH.

This sequence belongs to the krueppel C2H2-type zinc-finger protein family.

It localises to the nucleus. Its function is as follows. May be involved in transcriptional regulation. This is Gastrula zinc finger protein XlCGF51.1A from Xenopus laevis (African clawed frog).